The primary structure comprises 34 residues: Colipase (34 aa).

Disulfide bonds link Cys-12/Cys-23 and Cys-18/Cys-34.

It belongs to the colipase family. As to quaternary structure, forms a 1:1 stoichiometric complex with pancreatic lipase. Expressed by the pancreas.

Its subcellular location is the secreted. Colipase is a cofactor of pancreatic lipase. It allows the lipase to anchor itself to the lipid-water interface. Without colipase the enzyme is washed off by bile salts, which have an inhibitory effect on the lipase. The protein is Colipase (CLPS) of Gallus gallus (Chicken).